A 274-amino-acid polypeptide reads, in one-letter code: CTO1 family protein C17G9.12c (274 aa).

This sequence belongs to the CTO1 family.

It is found in the cytoplasm. The protein resides in the nucleus. This chain is CTO1 family protein C17G9.12c, found in Schizosaccharomyces pombe (strain 972 / ATCC 24843) (Fission yeast).